Reading from the N-terminus, the 156-residue chain is SsrA-binding protein (156 aa).

This sequence belongs to the SmpB family.

Its subcellular location is the cytoplasm. Functionally, required for rescue of stalled ribosomes mediated by trans-translation. Binds to transfer-messenger RNA (tmRNA), required for stable association of tmRNA with ribosomes. tmRNA and SmpB together mimic tRNA shape, replacing the anticodon stem-loop with SmpB. tmRNA is encoded by the ssrA gene; the 2 termini fold to resemble tRNA(Ala) and it encodes a 'tag peptide', a short internal open reading frame. During trans-translation Ala-aminoacylated tmRNA acts like a tRNA, entering the A-site of stalled ribosomes, displacing the stalled mRNA. The ribosome then switches to translate the ORF on the tmRNA; the nascent peptide is terminated with the 'tag peptide' encoded by the tmRNA and targeted for degradation. The ribosome is freed to recommence translation, which seems to be the essential function of trans-translation. The polypeptide is SsrA-binding protein (Thermoanaerobacter pseudethanolicus (strain ATCC 33223 / 39E) (Clostridium thermohydrosulfuricum)).